The following is a 224-amino-acid chain: UPF0173 metal-dependent hydrolase STH3160 (224 aa).

It belongs to the UPF0173 family.

This chain is UPF0173 metal-dependent hydrolase STH3160, found in Symbiobacterium thermophilum (strain DSM 24528 / JCM 14929 / IAM 14863 / T).